The following is a 184-amino-acid chain: Bifunctional protein PyrR (184 aa).

Positions 105–117 match the PRPP-binding motif; sequence VVMVDDVLFTGRT.

This sequence belongs to the purine/pyrimidine phosphoribosyltransferase family. PyrR subfamily.

The catalysed reaction is UMP + diphosphate = 5-phospho-alpha-D-ribose 1-diphosphate + uracil. Its function is as follows. Regulates the transcription of the pyrimidine nucleotide (pyr) operon in response to exogenous pyrimidines. In terms of biological role, also displays a weak uracil phosphoribosyltransferase activity which is not physiologically significant. This chain is Bifunctional protein PyrR, found in Rubrobacter xylanophilus (strain DSM 9941 / JCM 11954 / NBRC 16129 / PRD-1).